The chain runs to 245 residues: Probable transcriptional regulatory protein MARTH_orf271 (245 aa).

It belongs to the TACO1 family.

The protein localises to the cytoplasm. This Metamycoplasma arthritidis (strain 158L3-1) (Mycoplasma arthritidis) protein is Probable transcriptional regulatory protein MARTH_orf271.